We begin with the raw amino-acid sequence, 184 residues long: MKAGLTRRQVLDRTEKRAFVEFLADVFGSTSMVVVTQNKGLTVADVTELRRRIRAAGATYKVAKNRLASRALDGTQFDGIAPLLKGPTALAWSEDPASVAKVIVEFAKTNDKLVVLGGALGSQALGVDGIKALAELPSLDELRAKLVGMINTPATRIAGVVQAPAGQLARVFGAYAKAGEAEAA.

It belongs to the universal ribosomal protein uL10 family. As to quaternary structure, part of the ribosomal stalk of the 50S ribosomal subunit. The N-terminus interacts with L11 and the large rRNA to form the base of the stalk. The C-terminus forms an elongated spine to which L12 dimers bind in a sequential fashion forming a multimeric L10(L12)X complex.

Its function is as follows. Forms part of the ribosomal stalk, playing a central role in the interaction of the ribosome with GTP-bound translation factors. This Gluconobacter oxydans (strain 621H) (Gluconobacter suboxydans) protein is Large ribosomal subunit protein uL10.